The following is a 432-amino-acid chain: UDP-N-acetylmuramate--L-alanine ligase (432 aa).

Residue 109–115 (GAHGKST) participates in ATP binding.

This sequence belongs to the MurCDEF family.

It localises to the cytoplasm. It catalyses the reaction UDP-N-acetyl-alpha-D-muramate + L-alanine + ATP = UDP-N-acetyl-alpha-D-muramoyl-L-alanine + ADP + phosphate + H(+). Its pathway is cell wall biogenesis; peptidoglycan biosynthesis. In terms of biological role, cell wall formation. This Campylobacter jejuni subsp. jejuni serotype O:2 (strain ATCC 700819 / NCTC 11168) protein is UDP-N-acetylmuramate--L-alanine ligase.